The sequence spans 126 residues: Holo-[acyl-carrier-protein] synthase (126 aa).

Positions 9 and 58 each coordinate Mg(2+).

This sequence belongs to the P-Pant transferase superfamily. AcpS family. It depends on Mg(2+) as a cofactor.

The protein resides in the cytoplasm. It carries out the reaction apo-[ACP] + CoA = holo-[ACP] + adenosine 3',5'-bisphosphate + H(+). In terms of biological role, transfers the 4'-phosphopantetheine moiety from coenzyme A to a Ser of acyl-carrier-protein. In Sodalis glossinidius (strain morsitans), this protein is Holo-[acyl-carrier-protein] synthase.